The chain runs to 369 residues: Flagellar P-ring protein (369 aa).

An N-terminal signal peptide occupies residues 1 to 22; sequence MFNARRLIAATLLMSCAFGAHA.

The protein belongs to the FlgI family. The basal body constitutes a major portion of the flagellar organelle and consists of four rings (L,P,S, and M) mounted on a central rod.

The protein localises to the periplasm. Its subcellular location is the bacterial flagellum basal body. Assembles around the rod to form the L-ring and probably protects the motor/basal body from shearing forces during rotation. This Pseudomonas entomophila (strain L48) protein is Flagellar P-ring protein.